Here is a 601-residue protein sequence, read N- to C-terminus: DNA ligase (601 aa).

ATP is bound at residue Asp-258. Catalysis depends on Lys-260, which acts as the N6-AMP-lysine intermediate. ATP contacts are provided by Arg-265, Arg-280, Glu-310, Phe-350, Arg-427, and Lys-433. The tract at residues 568–601 (DKSPEDATTTDEILEMYNKQPKKKIESPPIDESV) is disordered.

The protein belongs to the ATP-dependent DNA ligase family. The cofactor is Mg(2+).

The catalysed reaction is ATP + (deoxyribonucleotide)n-3'-hydroxyl + 5'-phospho-(deoxyribonucleotide)m = (deoxyribonucleotide)n+m + AMP + diphosphate.. Its function is as follows. DNA ligase that seals nicks in double-stranded DNA during DNA replication, DNA recombination and DNA repair. The protein is DNA ligase of Saccharolobus islandicus (strain L.S.2.15 / Lassen #1) (Sulfolobus islandicus).